Consider the following 270-residue polypeptide: Pre-mRNA-splicing factor CWC23 (270 aa).

The 73-residue stretch at 12–84 (DLYRILHIHV…EHKKEYDIWY (73 aa)) folds into the J domain.

This sequence belongs to the DnaJ family. Associated with the spliceosome.

Its subcellular location is the cytoplasm. The protein resides in the nucleus. Involved in pre-mRNA splicing. May be involved in endoplasmic reticulum-associated protein degradation (ERAD) and required for growth at low and high temperatures. This Kluyveromyces lactis (strain ATCC 8585 / CBS 2359 / DSM 70799 / NBRC 1267 / NRRL Y-1140 / WM37) (Yeast) protein is Pre-mRNA-splicing factor CWC23 (CWC23).